We begin with the raw amino-acid sequence, 713 residues long: Ribosomal RNA large subunit methyltransferase K/L (713 aa).

A THUMP domain is found at 43-154; sequence LAYRITLWTR…NGVITIAMNF (112 aa).

Belongs to the methyltransferase superfamily. RlmKL family.

The protein localises to the cytoplasm. The enzyme catalyses guanosine(2445) in 23S rRNA + S-adenosyl-L-methionine = N(2)-methylguanosine(2445) in 23S rRNA + S-adenosyl-L-homocysteine + H(+). It catalyses the reaction guanosine(2069) in 23S rRNA + S-adenosyl-L-methionine = N(2)-methylguanosine(2069) in 23S rRNA + S-adenosyl-L-homocysteine + H(+). Functionally, specifically methylates the guanine in position 2445 (m2G2445) and the guanine in position 2069 (m7G2069) of 23S rRNA. The polypeptide is Ribosomal RNA large subunit methyltransferase K/L (Shewanella sp. (strain MR-7)).